Consider the following 218-residue polypeptide: Small ribosomal subunit protein uS3c (218 aa).

The KH type-2 domain occupies 47–118; sequence IRRHMRSSSN…KLNIAIVKVA (72 aa).

The protein belongs to the universal ribosomal protein uS3 family. Part of the 30S ribosomal subunit.

The protein resides in the plastid. The protein localises to the chloroplast. In Cycas taitungensis (Prince sago), this protein is Small ribosomal subunit protein uS3c (rps3).